Reading from the N-terminus, the 173-residue chain is Shikimate kinase (173 aa).

ATP is bound at residue 14–19; sequence GAGKST. Serine 18 contributes to the Mg(2+) binding site. The substrate site is built by aspartate 36, arginine 60, and glycine 82. An ATP-binding site is contributed by arginine 120. Arginine 140 serves as a coordination point for substrate. Residue glutamine 157 coordinates ATP.

Belongs to the shikimate kinase family. Monomer. The cofactor is Mg(2+).

The protein localises to the cytoplasm. The enzyme catalyses shikimate + ATP = 3-phosphoshikimate + ADP + H(+). The protein operates within metabolic intermediate biosynthesis; chorismate biosynthesis; chorismate from D-erythrose 4-phosphate and phosphoenolpyruvate: step 5/7. Catalyzes the specific phosphorylation of the 3-hydroxyl group of shikimic acid using ATP as a cosubstrate. This chain is Shikimate kinase, found in Buchnera aphidicola subsp. Acyrthosiphon pisum (strain APS) (Acyrthosiphon pisum symbiotic bacterium).